Consider the following 341-residue polypeptide: Ferrochelatase (341 aa).

The Fe cation site is built by His189 and Glu293.

It belongs to the ferrochelatase family.

The protein localises to the cytoplasm. The enzyme catalyses heme b + 2 H(+) = protoporphyrin IX + Fe(2+). It functions in the pathway porphyrin-containing compound metabolism; protoheme biosynthesis; protoheme from protoporphyrin-IX: step 1/1. In terms of biological role, catalyzes the ferrous insertion into protoporphyrin IX. In Pseudomonas fluorescens (strain SBW25), this protein is Ferrochelatase.